The primary structure comprises 314 residues: Mitochondrial translation factor 2 (314 aa).

A disordered region spans residues 111 to 136 (ENSSNIYDPSSPPDSPRKQQTHLGTI).

In terms of assembly, component of the MRH5C complex, composed of mrh5, ppr4, mtf2, and sls1. Proteins mtf2 and sls1 form a subcomplex that serves as a scaffold to bring mrh5 and ppr4 together. The MRH5C complex associates with the small subunit of the mitochondrial ribosome.

Its function is as follows. Translation activation factor that as part of the MRH5C complex specifically recruits cox1 mRNA to the mitochondrial ribosome for translation initiation. In Schizosaccharomyces pombe (strain 972 / ATCC 24843) (Fission yeast), this protein is Mitochondrial translation factor 2.